The primary structure comprises 202 residues: Protein GrpE (202 aa).

The span at Met-1 to Thr-14 shows a compositional bias: polar residues. The interval Met-1 to Leu-58 is disordered. Residues Arg-21 to Leu-58 show a composition bias toward low complexity.

This sequence belongs to the GrpE family. In terms of assembly, homodimer.

The protein localises to the cytoplasm. Participates actively in the response to hyperosmotic and heat shock by preventing the aggregation of stress-denatured proteins, in association with DnaK and GrpE. It is the nucleotide exchange factor for DnaK and may function as a thermosensor. Unfolded proteins bind initially to DnaJ; upon interaction with the DnaJ-bound protein, DnaK hydrolyzes its bound ATP, resulting in the formation of a stable complex. GrpE releases ADP from DnaK; ATP binding to DnaK triggers the release of the substrate protein, thus completing the reaction cycle. Several rounds of ATP-dependent interactions between DnaJ, DnaK and GrpE are required for fully efficient folding. The sequence is that of Protein GrpE from Paraburkholderia phymatum (strain DSM 17167 / CIP 108236 / LMG 21445 / STM815) (Burkholderia phymatum).